The primary structure comprises 766 residues: FYVE, RhoGEF and PH domain-containing protein 4 (766 aa).

Disordered stretches follow at residues 1-20 (MEEI…PSKV), 46-83 (NLNA…DKTQ), and 134-188 (ETAT…ESPL). Residues 1 to 150 (MEEIKPASAS…SPTTDSCDGN (150 aa)) are actin filament-binding. 2 stretches are compositionally biased toward polar residues: residues 58–83 (LTTT…DKTQ) and 145–157 (DSCD…SSYR). Residues 167-184 (LEERGAETETKVQERENG) show a composition bias toward basic and acidic residues. The 188-residue stretch at 206 to 393 (KLHKIANELL…STAASHSNSA (188 aa)) folds into the DH domain. Residues 422–521 (ELIKEGQILK…WIKALQETID (100 aa)) form the PH 1 domain. The FYVE-type zinc finger occupies 559 to 619 (DNEVTMCMKC…VCKDCYQIIS (61 aa)). Zn(2+) contacts are provided by Cys-565, Cys-568, Cys-582, Cys-585, Cys-590, Cys-593, Cys-611, and Cys-614. In terms of domain architecture, PH 2 spans 643 to 740 (NSVVCSFLQY…WLKVILLAVT (98 aa)). 2 positions are modified to phosphoserine: Ser-702 and Ser-716. The interval 742–766 (ETPGGPNEHPATLDDHPEPKKKSEC) is disordered. Over residues 752-766 (ATLDDHPEPKKKSEC) the composition is skewed to basic and acidic residues.

In terms of assembly, homooligomer. In terms of tissue distribution, expressed in different tissues, including brain, cerebellum, peripheral nerve, skeletal muscle, heart, uterus, placenta and testis.

It localises to the cytoplasm. The protein localises to the cytoskeleton. Its subcellular location is the cell projection. The protein resides in the filopodium. Functionally, activates CDC42, a member of the Ras-like family of Rho- and Rac proteins, by exchanging bound GDP for free GTP. Plays a role in regulating the actin cytoskeleton and cell shape. Activates MAPK8. This Homo sapiens (Human) protein is FYVE, RhoGEF and PH domain-containing protein 4 (FGD4).